A 535-amino-acid chain; its full sequence is Dual specificity calcium/calmodulin-dependent 3',5'-cyclic nucleotide phosphodiesterase 1A (535 aa).

Calmodulin-binding regions lie at residues 24-44 (TEKMWQRLKGILRCLVKQLER) and 114-137 (EKPKFRSIVHAVQAGIFVERMYRK). The 381-residue stretch at 142–522 (VGLAYPAAVI…ERWKELAAQE (381 aa)) folds into the PDEase domain. Residue His-219 is the Proton donor of the active site. 4 residues coordinate Zn(2+): His-223, His-259, Asp-260, and Asp-366. Asp-260 serves as a coordination point for Mg(2+).

It belongs to the cyclic nucleotide phosphodiesterase family. PDE1 subfamily. In terms of assembly, homodimer. Interacts with YWHAZ. Zn(2+) serves as cofactor. The cofactor is Mg(2+). Several tissues, including brain, kidney, testes and heart.

It carries out the reaction a nucleoside 3',5'-cyclic phosphate + H2O = a nucleoside 5'-phosphate + H(+). It catalyses the reaction 3',5'-cyclic GMP + H2O = GMP + H(+). The catalysed reaction is 3',5'-cyclic AMP + H2O = AMP + H(+). Type I PDE are activated by the binding of calmodulin in the presence of Ca(2+). Functionally, calcium/calmodulin-dependent cyclic nucleotide phosphodiesterase with a dual specificity for the second messengers cGMP and cAMP, which are key regulators of many important physiological processes. Has a higher efficiency with cGMP compared to cAMP. This Homo sapiens (Human) protein is Dual specificity calcium/calmodulin-dependent 3',5'-cyclic nucleotide phosphodiesterase 1A.